A 628-amino-acid polypeptide reads, in one-letter code: UvrABC system protein C (628 aa).

The GIY-YIG domain occupies 21–100 (TGPGIYQFKN…IKELKPRYNV (80 aa)). The 36-residue stretch at 214-249 (AGLLKELHEKMLTAAAELRFEEAAELKMQLQSLRRY) folds into the UVR domain.

It belongs to the UvrC family. Interacts with UvrB in an incision complex.

It localises to the cytoplasm. In terms of biological role, the UvrABC repair system catalyzes the recognition and processing of DNA lesions. UvrC both incises the 5' and 3' sides of the lesion. The N-terminal half is responsible for the 3' incision and the C-terminal half is responsible for the 5' incision. In Chlorobium luteolum (strain DSM 273 / BCRC 81028 / 2530) (Pelodictyon luteolum), this protein is UvrABC system protein C.